Here is a 343-residue protein sequence, read N- to C-terminus: Cytoplasmic tRNA 2-thiolation protein 1 (343 aa).

This sequence belongs to the TtcA family. CTU1/NCS6/ATPBD3 subfamily.

It is found in the cytoplasm. It functions in the pathway tRNA modification; 5-methoxycarbonylmethyl-2-thiouridine-tRNA biosynthesis. Plays a central role in 2-thiolation of mcm(5)S(2)U at tRNA wobble positions of tRNA(Lys), tRNA(Glu) and tRNA(Gln). Directly binds tRNAs and probably acts by catalyzing adenylation of tRNAs, an intermediate required for 2-thiolation. It is unclear whether it acts as a sulfurtransferase that transfers sulfur from thiocarboxylated URM1 onto the uridine of tRNAs at wobble position. This is Cytoplasmic tRNA 2-thiolation protein 1 from Drosophila sechellia (Fruit fly).